A 338-amino-acid polypeptide reads, in one-letter code: Anthranilate phosphoribosyltransferase (338 aa).

5-phospho-alpha-D-ribose 1-diphosphate-binding positions include Gly81, Gly84–Asp85, Thr89, Asn91–Thr94, Lys109–Ser117, and Ala121. Position 81 (Gly81) interacts with anthranilate. A Mg(2+)-binding site is contributed by Ser93. Asn112 is a binding site for anthranilate. Residue Arg167 participates in anthranilate binding. Positions 226 and 227 each coordinate Mg(2+).

It belongs to the anthranilate phosphoribosyltransferase family. As to quaternary structure, homodimer. Mg(2+) is required as a cofactor.

The catalysed reaction is N-(5-phospho-beta-D-ribosyl)anthranilate + diphosphate = 5-phospho-alpha-D-ribose 1-diphosphate + anthranilate. Its pathway is amino-acid biosynthesis; L-tryptophan biosynthesis; L-tryptophan from chorismate: step 2/5. Catalyzes the transfer of the phosphoribosyl group of 5-phosphorylribose-1-pyrophosphate (PRPP) to anthranilate to yield N-(5'-phosphoribosyl)-anthranilate (PRA). This Cereibacter sphaeroides (strain ATCC 17025 / ATH 2.4.3) (Rhodobacter sphaeroides) protein is Anthranilate phosphoribosyltransferase.